Reading from the N-terminus, the 706-residue chain is MLTPIIRKFQYGQHTVTIETGMMARQATAAVMVSMDDTAVFVTVVGQKKAKPGQSFFPLTVNYQERTYAAGRIPGSFFRREGRPSEGETLTSRLIDRPIRPLFPDSFLNEVQVIATVVSVNPQINPDIVALIGASAALSLSGIPFNGPIGAARVGFINDQYVLNPTTDELKESRLDLVVAGTAGAVLMVESEADILSEDQMLGAVVFGHEQQQVVIENINALVAEAGKPKWDWHAEPVNEALHARVAELAAARLGDAYRITEKQERYTQVDAIKADVTEALLAQDDTLDAAEIQDILGSVEKDVVRSRVLRGEPRIDGREKDMIRGLDVRTGVLPRTHGSALFTRGETQALVTATLGTARDAQNIDELMGERTDSFLLHYNFPPYSVGETGMVGSPKRREIGHGRLAKRGVLAVMPSPSEFPYTVRVVSEITESNGSSSMASVCGASLALMDAGVPIKAAVAGIAMGLVKEDENFVVLSDILGDEDHLGDMDFKVAGSRDGITALQMDIKIEGITREIMQVALNQAKGARLHILGVMEQAISTPRGDISEFAPRIYTMKINPEKIKDVIGKGGSVIRALTDETGTTIEIEDDGTIKIAATDGDKAKHAIRRIEEITAEIEVNRIYAGKVTRIVDFGAFVAIGGGKEGLVHISQIADKRVDKVTDYLQMGQEVPVKVIEVDRQGRIRLSMKEATTPDAEAPAPEAAE.

Residues Asp486 and Asp492 each contribute to the Mg(2+) site. The KH domain maps to 553–612; that stretch reads PRIYTMKINPEKIKDVIGKGGSVIRALTDETGTTIEIEDDGTIKIAATDGDKAKHAIRRI. The S1 motif domain occupies 622 to 690; that stretch reads NRIYAGKVTR…RQGRIRLSMK (69 aa).

This sequence belongs to the polyribonucleotide nucleotidyltransferase family. Component of the RNA degradosome, which is a multiprotein complex involved in RNA processing and mRNA degradation. Requires Mg(2+) as cofactor.

The protein resides in the cytoplasm. It carries out the reaction RNA(n+1) + phosphate = RNA(n) + a ribonucleoside 5'-diphosphate. Involved in mRNA degradation. Catalyzes the phosphorolysis of single-stranded polyribonucleotides processively in the 3'- to 5'-direction. The chain is Polyribonucleotide nucleotidyltransferase from Yersinia enterocolitica serotype O:8 / biotype 1B (strain NCTC 13174 / 8081).